Reading from the N-terminus, the 150-residue chain is Actin-related protein 2/3 complex subunit 5-C (150 aa).

The tract at residues 21–45 (NKFVDEEEAGEGQQGPDEGEVDSAI) is disordered.

Belongs to the ARPC5 family. As to quaternary structure, component of the Arp2/3 complex composed of actr2/arp2, actr3/arp3, arpc1 (arpc1a or arpc1b), arpc2, arpc3, arpc4 and arpc5.

The protein resides in the cytoplasm. It is found in the cytoskeleton. Its subcellular location is the cell projection. The protein localises to the nucleus. Its function is as follows. Component of the Arp2/3 complex, a multiprotein complex that mediates actin polymerization upon stimulation by nucleation-promoting factor (NPF). The Arp2/3 complex mediates the formation of branched actin networks in the cytoplasm, providing the force for cell motility. In addition to its role in the cytoplasmic cytoskeleton, the Arp2/3 complex also promotes actin polymerization in the nucleus, thereby regulating gene transcription and repair of damaged DNA. The Arp2/3 complex promotes homologous recombination (HR) repair in response to DNA damage by promoting nuclear actin polymerization, leading to drive motility of double-strand breaks (DSBs). This is Actin-related protein 2/3 complex subunit 5-C (arpc5-c) from Xenopus laevis (African clawed frog).